The sequence spans 398 residues: 1-deoxy-D-xylulose 5-phosphate reductoisomerase (398 aa).

NADPH-binding residues include Thr10, Gly11, Ser12, Ile13, Gly36, Lys37, Asn38, and Asn124. 1-deoxy-D-xylulose 5-phosphate is bound at residue Lys125. Glu126 is a binding site for NADPH. Residue Asp150 coordinates Mn(2+). Positions 151, 152, 186, and 209 each coordinate 1-deoxy-D-xylulose 5-phosphate. Glu152 is a binding site for Mn(2+). Gly215 contributes to the NADPH binding site. 1-deoxy-D-xylulose 5-phosphate-binding residues include Ser222, Asn227, Lys228, and Glu231. Residue Glu231 participates in Mn(2+) binding.

Belongs to the DXR family. As to quaternary structure, homodimer. It depends on Mg(2+) as a cofactor. Mn(2+) is required as a cofactor.

It carries out the reaction 2-C-methyl-D-erythritol 4-phosphate + NADP(+) = 1-deoxy-D-xylulose 5-phosphate + NADPH + H(+). Its pathway is isoprenoid biosynthesis; isopentenyl diphosphate biosynthesis via DXP pathway; isopentenyl diphosphate from 1-deoxy-D-xylulose 5-phosphate: step 1/6. Functionally, catalyzes the NADPH-dependent rearrangement and reduction of 1-deoxy-D-xylulose-5-phosphate (DXP) to 2-C-methyl-D-erythritol 4-phosphate (MEP). The sequence is that of 1-deoxy-D-xylulose 5-phosphate reductoisomerase from Escherichia coli O157:H7.